The sequence spans 515 residues: SWI/SNF-related matrix-associated actin-dependent regulator of chromatin subfamily D member 1 (515 aa).

The disordered stretch occupies residues 1–128 (MAARAGFQSV…RNHNAKKKKM (128 aa)). The span at 14–23 (GGAGASGGAG) shows a compositional bias: gly residues. An interaction with ESR1, NR1H4, NR3C1, PGR and SMARCA4 region spans residues 43-167 (APGQGLYRSP…DQTIMRKRLD (125 aa)). An asymmetric dimethylarginine mark is found at R68 and R88. Residue K101 forms a Glycyl lysine isopeptide (Lys-Gly) (interchain with G-Cter in SUMO2) linkage. The segment covering 103–117 (PAPQQIKQVQQQAVQ) has biased composition (low complexity). Positions 168–474 (IQEALKRPIK…VMTDVVGNSE (307 aa)) are interaction with SMARCC1 and SMARCC2. The necessary for GR/NR3C1-mediated remodeling and transcription from chromatin; required for GR/NR3C1 interaction with the BRG1/SMARCA4 complex in vivo stretch occupies residues 180–515 (RKLRIFISNT…LEQALGIRNT (336 aa)). Position 203 is a phosphothreonine (T203). K223 bears the N6-acetyllysine mark. The region spanning 290 to 367 (YQPPQFKLDP…PQRLHALLMP (78 aa)) is the SWIB/MDM2 domain. The stretch at 412–440 (ASQQEIATLDNKIHETIETINQLKTQREF) forms a coiled coil.

The protein belongs to the SMARCD family. Component of the multiprotein chromatin-remodeling complexes SWI/SNF: SWI/SNF-A (BAF), SWI/SNF-B (PBAF) and related complexes. The canonical complex contains a catalytic subunit (either SMARCA4/BRG1/BAF190A or SMARCA2/BRM/BAF190B), and at least SMARCE1, ACTL6A/BAF53, SMARCC1/BAF155, SMARCC2/BAF170, and SMARCB1/SNF5/BAF47. Other subunits specific to each of the complexes may also be present permitting several possible combinations developmentally and tissue specific. Component of the BAF complex, which includes at least actin (ACTB), ARID1A/BAF250A, ARID1B/BAF250B, SMARCA2/BRM, SMARCA4/BRG1/BAF190A, ACTL6A/BAF53, ACTL6B/BAF53B, SMARCE1/BAF57, SMARCC1/BAF155, SMARCC2/BAF170, SMARCB1/SNF5/INI1, and one or more SMARCD1/BAF60A, SMARCD2/BAF60B, or SMARCD3/BAF60C. In muscle cells, the BAF complex also contains DPF3. Component of neural progenitors-specific chromatin remodeling complex (npBAF complex) composed of at least, ARID1A/BAF250A or ARID1B/BAF250B, SMARCD1/BAF60A, SMARCD3/BAF60C, SMARCA2/BRM/BAF190B, SMARCA4/BRG1/BAF190A, SMARCB1/BAF47, SMARCC1/BAF155, SMARCE1/BAF57, SMARCC2/BAF170, PHF10/BAF45A, ACTL6A/BAF53A and actin. Component of neuron-specific chromatin remodeling complex (nBAF complex) composed of at least, ARID1A/BAF250A or ARID1B/BAF250B, SMARCD1/BAF60A, SMARCD3/BAF60C, SMARCA2/BRM/BAF190B, SMARCA4/BRG1/BAF190A, SMARCB1/BAF47, SMARCC1/BAF155, SMARCE1/BAF57, SMARCC2/BAF170, DPF1/BAF45B, DPF3/BAF45C, ACTL6B/BAF53B and actin. Component of the SWI/SNF-B (PBAF) chromatin remodeling complex, at least composed of SMARCA4/BRG1, SMARCB1/BAF47/SNF5, ACTL6A/BAF53A or ACTL6B/BAF53B, SMARCE1/BAF57, SMARCD1/BAF60A, SMARCD2/BAF60B, perhaps SMARCD3/BAF60C, SMARCC1/BAF155, SMARCC2/BAF170, PBRM1/BAF180, ARID2/BAF200 and actin (ACTB). Component of SWI/SNF (GBAF) subcomplex, which includes at least BICRA or BICRAL (mutually exclusive), BRD9, SS18, SMARCA2/BRM, SMARCA4/BRG1/BAF190A, ACTL6A/BAF53, SMARCC1/BAF155, and SMARCD1/BAF60A. Specifically interacts with the VDR heterodimer complex. Interacts with ESR1, NR3C1, NR1H4, PGR, SMARCA4, SMARCC1 and SMARCC2. Interacts with DPF2. Interacts with FOS, FOSB, FOSL1 and FOSL2.

The protein localises to the nucleus. Functionally, involved in transcriptional activation and repression of select genes by chromatin remodeling (alteration of DNA-nucleosome topology). Component of SWI/SNF chromatin remodeling complexes that carry out key enzymatic activities, changing chromatin structure by altering DNA-histone contacts within a nucleosome in an ATP-dependent manner. Belongs to the neural progenitors-specific chromatin remodeling complex (npBAF complex) and the neuron-specific chromatin remodeling complex (nBAF complex). During neural development a switch from a stem/progenitor to a postmitotic chromatin remodeling mechanism occurs as neurons exit the cell cycle and become committed to their adult state. The transition from proliferating neural stem/progenitor cells to postmitotic neurons requires a switch in subunit composition of the npBAF and nBAF complexes. As neural progenitors exit mitosis and differentiate into neurons, npBAF complexes which contain ACTL6A/BAF53A and PHF10/BAF45A, are exchanged for homologous alternative ACTL6B/BAF53B and DPF1/BAF45B or DPF3/BAF45C subunits in neuron-specific complexes (nBAF). The npBAF complex is essential for the self-renewal/proliferative capacity of the multipotent neural stem cells. The nBAF complex along with CREST plays a role regulating the activity of genes essential for dendrite growth. Has a strong influence on vitamin D-mediated transcriptional activity from an enhancer vitamin D receptor element (VDRE). May be a link between mammalian SWI-SNF-like chromatin remodeling complexes and the vitamin D receptor (VDR) heterodimer. Mediates critical interactions between nuclear receptors and the BRG1/SMARCA4 chromatin-remodeling complex for transactivation. Interacts with AKIRIN2. This Bos taurus (Bovine) protein is SWI/SNF-related matrix-associated actin-dependent regulator of chromatin subfamily D member 1 (SMARCD1).